The following is a 415-amino-acid chain: Peptide chain release factor subunit 1 (415 aa).

This sequence belongs to the eukaryotic release factor 1 family. As to quaternary structure, heterodimer of two subunits, one of which binds GTP.

The protein resides in the cytoplasm. Functionally, directs the termination of nascent peptide synthesis (translation) in response to the termination codons UAA, UAG and UGA. The polypeptide is Peptide chain release factor subunit 1 (Thermococcus onnurineus (strain NA1)).